The sequence spans 132 residues: Small ribosomal subunit protein uS8 (132 aa).

The protein belongs to the universal ribosomal protein uS8 family. Part of the 30S ribosomal subunit. Contacts proteins S5 and S12.

Its function is as follows. One of the primary rRNA binding proteins, it binds directly to 16S rRNA central domain where it helps coordinate assembly of the platform of the 30S subunit. This is Small ribosomal subunit protein uS8 from Streptococcus pneumoniae (strain Taiwan19F-14).